The chain runs to 3059 residues: Genome polyprotein (3059 aa).

Residues 154–298 (GVTPYSVQQL…ESTMLSTHHY (145 aa)) form the Peptidase S30 domain. Active-site for P1 proteinase activity residues include His-207, Asp-216, and Ser-249. Residues 349–352 (KITC) carry the Involved in interaction with stylet and aphid transmission motif. An Involved in virions binding and aphid transmission motif is present at residues 607 to 609 (PTK). Residues 633–755 (MYIAKSGYCY…DSEMKHYRVG (123 aa)) form the Peptidase C6 domain. Active-site for helper component proteinase activity residues include Cys-641 and His-714. Residues 1226–1378 (QIAHDLHTDI…TQYPVEIRVE (153 aa)) form the Helicase ATP-binding domain. An ATP-binding site is contributed by 1239-1246 (GAVGSGKS). Residues 1328 to 1331 (DEFH) carry the DEFH box motif. A Helicase C-terminal domain is found at 1397–1556 (DLTSKCDNLL…GLPISTQSVT (160 aa)). Residues 1883–1890 (KKGKTKGK) carry the Nuclear localization signal motif. An O-(5'-phospho-RNA)-tyrosine modification is found at Tyr-1905. The Peptidase C4 domain maps to 2032-2250 (STSMFRGVRD…VCWGSFHLQD (219 aa)). Active-site for nuclear inclusion protein A activity residues include His-2077, Asp-2112, and Cys-2182. Residues 2516 to 2640 (WVYCDADGSQ…AIRPDMEHKL (125 aa)) form the RdRp catalytic domain. Thr-3042 carries the post-translational modification Phosphothreonine.

It belongs to the potyviridae genome polyprotein family. As to quaternary structure, interacts with host eIF4E protein (via cap-binding region); this interaction mediates the translation of the VPg-viral RNA conjugates. Part of a complex that comprises VPg, RNA, host EIF4E and EIF4G; this interaction mediates the translation of the VPg-viral RNA conjugates. In terms of processing, VPg is uridylylated by the polymerase and is covalently attached to the 5'-end of the genomic RNA. This uridylylated form acts as a nucleotide-peptide primer for the polymerase. Post-translationally, phosphorylation inhibits the RNA-binding capacity of the capsid protein. Potyviral RNA is expressed as two polyproteins which undergo post-translational proteolytic processing. Genome polyprotein is processed by NIa-pro, P1 and HC-pro proteinases resulting in the production of at least ten individual proteins. P3N-PIPO polyprotein is cleaved by P1 and HC-pro proteinases resulting in the production of three individual proteins. The P1 proteinase and the HC-pro cleave only their respective C-termini autocatalytically. 6K1 is essential for proper proteolytic separation of P3 from CI.

The protein resides in the host cytoplasmic vesicle. It is found in the host nucleus. The protein localises to the virion. It catalyses the reaction RNA(n) + a ribonucleoside 5'-triphosphate = RNA(n+1) + diphosphate. It carries out the reaction Hydrolyzes glutaminyl bonds, and activity is further restricted by preferences for the amino acids in P6 - P1' that vary with the species of potyvirus, e.g. Glu-Xaa-Xaa-Tyr-Xaa-Gln-|-(Ser or Gly) for the enzyme from tobacco etch virus. The natural substrate is the viral polyprotein, but other proteins and oligopeptides containing the appropriate consensus sequence are also cleaved.. The enzyme catalyses Hydrolyzes a Gly-|-Gly bond at its own C-terminus, commonly in the sequence -Tyr-Xaa-Val-Gly-|-Gly, in the processing of the potyviral polyprotein.. Functionally, required for aphid transmission and also has proteolytic activity. Only cleaves a Gly-Gly dipeptide at its own C-terminus. Interacts with virions and aphid stylets. Acts as a suppressor of RNA-mediated gene silencing, also known as post-transcriptional gene silencing (PTGS), a mechanism of plant viral defense that limits the accumulation of viral RNAs. May have RNA-binding activity. Has helicase activity. It may be involved in replication. Its function is as follows. Indispensable for virus replication. Reduces the abundance of host transcripts related to jasmonic acid biosynthesis therefore altering the host defenses. In order to increase its own stability, decreases host protein degradation pathways. In terms of biological role, indispensable for virus replication. Functionally, mediates the cap-independent, EIF4E-dependent translation of viral genomic RNAs. Binds to the cap-binding site of host EIF4E and thus interferes with the host EIF4E-dependent mRNA export and translation. VPg-RNA directly binds EIF4E and is a template for transcription. Also forms trimeric complexes with EIF4E-EIF4G, which are templates for translation. Has RNA-binding and proteolytic activities. Its function is as follows. An RNA-dependent RNA polymerase that plays an essential role in the virus replication. In terms of biological role, involved in aphid transmission, cell-to-cell and systemis movement, encapsidation of the viral RNA and in the regulation of viral RNA amplification. In Potato virus A (PVA), this protein is Genome polyprotein.